Here is a 361-residue protein sequence, read N- to C-terminus: UDP-3-O-acylglucosamine N-acyltransferase (361 aa).

The Proton acceptor role is filled by His-253.

Belongs to the transferase hexapeptide repeat family. LpxD subfamily. As to quaternary structure, homotrimer.

The enzyme catalyses a UDP-3-O-[(3R)-3-hydroxyacyl]-alpha-D-glucosamine + a (3R)-hydroxyacyl-[ACP] = a UDP-2-N,3-O-bis[(3R)-3-hydroxyacyl]-alpha-D-glucosamine + holo-[ACP] + H(+). Its pathway is bacterial outer membrane biogenesis; LPS lipid A biosynthesis. Functionally, catalyzes the N-acylation of UDP-3-O-acylglucosamine using 3-hydroxyacyl-ACP as the acyl donor. Is involved in the biosynthesis of lipid A, a phosphorylated glycolipid that anchors the lipopolysaccharide to the outer membrane of the cell. This chain is UDP-3-O-acylglucosamine N-acyltransferase, found in Burkholderia pseudomallei (strain 668).